The chain runs to 204 residues: Double homeobox protein A (204 aa).

Residues 15–74 (HRRCRTKFTEEQLKILINTFNQKPYPGYATKQKLALEINTEESRIQIWFQNRRARHGFQK) constitute a DNA-binding region (homeobox 1). Disordered stretches follow at residues 73-101 (QKRP…SREA) and 163-204 (EPVA…ARTW). The segment covering 81-90 (LESSQSQGQD) has biased composition (polar residues). The homeobox 2 DNA-binding region spans 101–160 (ARRCRTTYSASQLHTLIKAFMKNPYPGIDSREELAKEIGVPESRVQIWFQNRRSRLLLQR). Polar residues predominate over residues 184 to 197 (EDTQNGTNFTSDSH).

It belongs to the paired homeobox family. Expressed in embryonic stem cells.

The protein localises to the nucleus. Functionally, transcription factor that acts as a repressor. The polypeptide is Double homeobox protein A (Homo sapiens (Human)).